We begin with the raw amino-acid sequence, 134 residues long: Fluoride-specific ion channel FluC (134 aa).

4 helical membrane-spanning segments follow: residues 7–27, 38–58, 69–89, and 110–130; these read LAVAIGGSLGAMSRYLVTIMA, GTLLVNTLGSFLAGFFLIVLV, LFLFTGFLGAFTTFSSFAAES, and VGSLSMVFVGTLVAKYVLLGH. Na(+)-binding residues include Gly-77 and Thr-80.

The protein belongs to the fluoride channel Fluc/FEX (TC 1.A.43) family.

Its subcellular location is the cell inner membrane. It catalyses the reaction fluoride(in) = fluoride(out). Its activity is regulated as follows. Na(+) is not transported, but it plays an essential structural role and its presence is essential for fluoride channel function. Functionally, fluoride-specific ion channel. Important for reducing fluoride concentration in the cell, thus reducing its toxicity. The protein is Fluoride-specific ion channel FluC of Legionella pneumophila (strain Lens).